Consider the following 311-residue polypeptide: Homoserine kinase (311 aa).

96–106 (PLARGLGSSAA) lines the ATP pocket.

Belongs to the GHMP kinase family. Homoserine kinase subfamily.

The protein localises to the cytoplasm. It catalyses the reaction L-homoserine + ATP = O-phospho-L-homoserine + ADP + H(+). It participates in amino-acid biosynthesis; L-threonine biosynthesis; L-threonine from L-aspartate: step 4/5. Its function is as follows. Catalyzes the ATP-dependent phosphorylation of L-homoserine to L-homoserine phosphate. In Natranaerobius thermophilus (strain ATCC BAA-1301 / DSM 18059 / JW/NM-WN-LF), this protein is Homoserine kinase.